Reading from the N-terminus, the 434-residue chain is MTTPRDNLAILAETDPVVYRLIQQELNRQRDHLEMIASENFTSPAVLAAQGSVLTNKYAEGLPGKRYYGGCEFIDEIEQLAIDRAKQLFGAAHANVQPHSGAQANFAVFLALLQPGDTIMGMDLAHGGHLTHGSPVNVSGKWFRVVHYGVDPQTERIDFDQVRDLARQHRPKLIICGYSAYPRIIDFAAFRAIADEVGAYLMADIAHIAGLVATGHHPNPVPICDVVTTTTHKTLRGPRGGLILTRDPELGKKLDKAVFPGSQGGPLEHVIAGKAVAFGEALQPSFAQYSAQVIANAQALAATLQRRGIRLVSGGTDNHLVLLDLRSVSAVLEKNGAADPVMTGKRADRLMEEIHITANKNTIPFDPQPPSVASGLRLGSPALTTRGLGPAEFEEIGEIIADCLFQPGDPGVLEACRRRVAELCRRFPLYPHLG.

(6S)-5,6,7,8-tetrahydrofolate contacts are provided by residues leucine 124 and 128–130 (GHL). N6-(pyridoxal phosphate)lysine is present on lysine 233. Glutamate 249 provides a ligand contact to (6S)-5,6,7,8-tetrahydrofolate.

This sequence belongs to the SHMT family. Homodimer. Pyridoxal 5'-phosphate is required as a cofactor.

The protein resides in the cytoplasm. The enzyme catalyses (6R)-5,10-methylene-5,6,7,8-tetrahydrofolate + glycine + H2O = (6S)-5,6,7,8-tetrahydrofolate + L-serine. The protein operates within one-carbon metabolism; tetrahydrofolate interconversion. Its pathway is amino-acid biosynthesis; glycine biosynthesis; glycine from L-serine: step 1/1. Catalyzes the reversible interconversion of serine and glycine with tetrahydrofolate (THF) serving as the one-carbon carrier. This reaction serves as the major source of one-carbon groups required for the biosynthesis of purines, thymidylate, methionine, and other important biomolecules. Also exhibits THF-independent aldolase activity toward beta-hydroxyamino acids, producing glycine and aldehydes, via a retro-aldol mechanism. The chain is Serine hydroxymethyltransferase from Synechococcus sp. (strain JA-3-3Ab) (Cyanobacteria bacterium Yellowstone A-Prime).